The sequence spans 332 residues: Ketol-acid reductoisomerase (NADP(+)) (332 aa).

Residues 3-183 (TEIFYDADAD…GGARAGVIKT (181 aa)) enclose the KARI N-terminal Rossmann domain. NADP(+) contacts are provided by residues 26–29 (YGSQ), Ser52, Ser54, and 84–87 (DTKQ). The active site involves His109. Gly135 is an NADP(+) binding site. In terms of domain architecture, KARI C-terminal knotted spans 184-329 (TFTEETETDL…KKLRSLMSWT (146 aa)). Residues Asp192, Glu196, Glu228, and Glu232 each coordinate Mg(2+). Substrate is bound at residue Ser253.

This sequence belongs to the ketol-acid reductoisomerase family. Mg(2+) is required as a cofactor.

It carries out the reaction (2R)-2,3-dihydroxy-3-methylbutanoate + NADP(+) = (2S)-2-acetolactate + NADPH + H(+). The enzyme catalyses (2R,3R)-2,3-dihydroxy-3-methylpentanoate + NADP(+) = (S)-2-ethyl-2-hydroxy-3-oxobutanoate + NADPH + H(+). It participates in amino-acid biosynthesis; L-isoleucine biosynthesis; L-isoleucine from 2-oxobutanoate: step 2/4. The protein operates within amino-acid biosynthesis; L-valine biosynthesis; L-valine from pyruvate: step 2/4. Its function is as follows. Involved in the biosynthesis of branched-chain amino acids (BCAA). Catalyzes an alkyl-migration followed by a ketol-acid reduction of (S)-2-acetolactate (S2AL) to yield (R)-2,3-dihydroxy-isovalerate. In the isomerase reaction, S2AL is rearranged via a Mg-dependent methyl migration to produce 3-hydroxy-3-methyl-2-ketobutyrate (HMKB). In the reductase reaction, this 2-ketoacid undergoes a metal-dependent reduction by NADPH to yield (R)-2,3-dihydroxy-isovalerate. The sequence is that of Ketol-acid reductoisomerase (NADP(+)) from Saccharopolyspora erythraea (strain ATCC 11635 / DSM 40517 / JCM 4748 / NBRC 13426 / NCIMB 8594 / NRRL 2338).